Reading from the N-terminus, the 2155-residue chain is Polyketide synthase 2 (2155 aa).

The tract at residues 7-244 is N-terminal acylcarrier protein transacylase domain (SAT); that stretch reads FIFGDQTGGF…IPIPIWAPYH (238 aa). The Ketosynthase family 3 (KS3) domain occupies 374 to 807; the sequence is DSKIAIIGMS…GGNSALLLED (434 aa). Catalysis depends on for beta-ketoacyl synthase activity residues C546, H681, and H723. The interval 908–1213 is malonyl-CoA:ACP transacylase (MAT) domain; that stretch reads GFVFSGQGAQ…ASLHRKDDGW (306 aa). The active-site For acyl/malonyl transferase activity is S998. Positions 1290–1605 are product template (PT) domain; sequence TSSVQRIIRQ…RSLLNKVLPP (316 aa). Residues 1294–1428 form an N-terminal hotdog fold region; that stretch reads QRIIRQTDGP…CLLRFADPTS (135 aa). In terms of domain architecture, PKS/mFAS DH spans 1294 to 1600; that stretch reads QRIIRQTDGP…FLGMSRSLLN (307 aa). H1327 functions as the Proton acceptor; for dehydratase activity in the catalytic mechanism. The interval 1455–1600 is C-terminal hotdog fold; that stretch reads TDSLLSKGIV…FLGMSRSLLN (146 aa). The Proton donor; for dehydratase activity role is filled by D1514. Positions 1626–1654 are disordered; the sequence is AASAKDTERRPLDIPTRAQRQPSSPQTGT. Over residues 1643–1654 the composition is skewed to polar residues; the sequence is AQRQPSSPQTGT. A Carrier 1 domain is found at 1649 to 1726; the sequence is SPQTGTMGRI…ELKAFLGADQ (78 aa). An O-(pantetheine 4'-phosphoryl)serine modification is found at S1686. The interval 1735 to 1765 is disordered; it reads SSIGQHTPQTSDKGSGTLASQKTDGDTGPDT. The span at 1736-1756 shows a compositional bias: polar residues; sequence SIGQHTPQTSDKGSGTLASQK. The Carrier 2 domain occupies 1764-1838; the sequence is DTTLNRVCAI…ALQKALCGSE (75 aa). S1798 carries the O-(pantetheine 4'-phosphoryl)serine modification. Positions 1873 to 2149 are thioesterase (TE) domain; that stretch reads ASPPHATSIL…MVEMGNLIGD (277 aa). S1979 functions as the For thioesterase activity in the catalytic mechanism.

Its function is as follows. Polyketide synthase; part of the Pks2 gene cluster that mediates the formation of infectious structures (appressoria), enabling these fungi to kill insects faster. The product of the Pks2 gene cluster is different from the one of Pks1 and has still not been identified. The polypeptide is Polyketide synthase 2 (Metarhizium anisopliae (strain ARSEF 549)).